The following is a 430-amino-acid chain: 3-phosphoshikimate 1-carboxyvinyltransferase (430 aa).

Lys-20, Ser-21, and Arg-25 together coordinate 3-phosphoshikimate. Residue Lys-20 coordinates phosphoenolpyruvate. Gly-90 and Arg-118 together coordinate phosphoenolpyruvate. Positions 163, 164, 165, 191, 311, and 338 each coordinate 3-phosphoshikimate. Gln-165 lines the phosphoenolpyruvate pocket. Asp-311 acts as the Proton acceptor in catalysis. Residues Arg-342 and Arg-383 each coordinate phosphoenolpyruvate.

It belongs to the EPSP synthase family. In terms of assembly, monomer.

Its subcellular location is the cytoplasm. The catalysed reaction is 3-phosphoshikimate + phosphoenolpyruvate = 5-O-(1-carboxyvinyl)-3-phosphoshikimate + phosphate. It functions in the pathway metabolic intermediate biosynthesis; chorismate biosynthesis. Its function is as follows. Catalyzes the transfer of the enolpyruvyl moiety of phosphoenolpyruvate (PEP) to the 5-hydroxyl of shikimate-3-phosphate (S3P) to produce enolpyruvyl shikimate-3-phosphate and inorganic phosphate. In Methanosarcina mazei (strain ATCC BAA-159 / DSM 3647 / Goe1 / Go1 / JCM 11833 / OCM 88) (Methanosarcina frisia), this protein is 3-phosphoshikimate 1-carboxyvinyltransferase.